The primary structure comprises 254 residues: Type III pantothenate kinase (254 aa).

Residue valine 22–arginine 29 coordinates ATP. Substrate is bound by residues tyrosine 89 and glycine 93 to arginine 96. The active-site Proton acceptor is the aspartate 95. Residue aspartate 115 participates in K(+) binding. Threonine 118 contributes to the ATP binding site. Substrate is bound at residue threonine 173.

The protein belongs to the type III pantothenate kinase family. As to quaternary structure, homodimer. NH4(+) serves as cofactor. Requires K(+) as cofactor.

It localises to the cytoplasm. It catalyses the reaction (R)-pantothenate + ATP = (R)-4'-phosphopantothenate + ADP + H(+). Its pathway is cofactor biosynthesis; coenzyme A biosynthesis; CoA from (R)-pantothenate: step 1/5. Its function is as follows. Catalyzes the phosphorylation of pantothenate (Pan), the first step in CoA biosynthesis. The protein is Type III pantothenate kinase of Synechococcus sp. (strain JA-2-3B'a(2-13)) (Cyanobacteria bacterium Yellowstone B-Prime).